We begin with the raw amino-acid sequence, 145 residues long: MRCEWEGCQEEIGDNVRGHLLSHIEKDEEARCLWKDCARYGEAQASKHALLAHARRHTGERPFECHLCGKDYTRSDPLKKHLLRHEAVDSKNENLIRKIEYLGQLLAEYRRESLRIMNDIESIRYNIQAMSRKIAYETKGNKSSL.

The segment at 35–57 (KDCARYGEAQASKHALLAHARRH) adopts a C2H2-type 1; atypical zinc-finger fold. The C2H2-type 2 zinc finger occupies 63–85 (FECHLCGKDYTRSDPLKKHLLRH).

The chain is Zinc finger C2H2 protein ECU06_1150 from Encephalitozoon cuniculi (strain GB-M1) (Microsporidian parasite).